The chain runs to 388 residues: Interferon alpha/beta receptor 1b (388 aa).

Fibronectin type-III domains are found at residues 5 to 102 (LPQP…FCPD) and 109 to 211 (PPSR…TEGD). The helical transmembrane segment at 217-237 (IFLYFLVSMMVCFLLVLLSSY) threads the bilayer. Positions 308-357 (TAPPSELEQDSGRHIRQDSGDSGIYSTEGGSAQQGRSGGEPIRRDQEVDS) are disordered. Basic and acidic residues predominate over residues 317-326 (DSGRHIRQDS). Positions 331 to 342 (IYSTEGGSAQQG) are enriched in polar residues.

The protein belongs to the type II cytokine receptor family. As to quaternary structure, heterodimer with IFNAR2; forming the receptor for type I interferon.

The protein localises to the cell membrane. It is found in the cytoplasm. It localises to the perinuclear region. In terms of biological role, together with IFNAR2, forms the heterodimeric receptor for type I interferons (including interferons alpha, beta, epsilon, omega and kappa). Type I interferon binding activates the JAK-STAT signaling cascade, resulting in transcriptional activation or repression of interferon-regulated genes that encode the effectors of the interferon response. Mechanistically, type I interferon-binding brings the IFNAR1 and IFNAR2 subunits into close proximity with one another, driving their associated Janus kinases (JAKs) (TYK2 bound to IFNAR1 and JAK1 bound to IFNAR2) to cross-phosphorylate one another. The activated kinases phosphorylate specific tyrosine residues on the intracellular domains of IFNAR1 and IFNAR2, forming docking sites for the STAT transcription factors. STAT proteins are then phosphorylated by the JAKs, promoting their translocation into the nucleus to regulate expression of interferon-regulated genes. The polypeptide is Interferon alpha/beta receptor 1b (Oncorhynchus mykiss (Rainbow trout)).